Here is a 418-residue protein sequence, read N- to C-terminus: Translation initiation factor 2 subunit gamma (418 aa).

The tr-type G domain occupies Gln-7 to Gln-206. The interval Gly-16–Thr-23 is G1. Mg(2+)-binding residues include Asp-19, Thr-23, Gly-44, and Thr-46. GTP is bound at residue Asp-19–Thr-24. The G2 stretch occupies residues Gly-44 to Lys-48. Zn(2+) is bound by residues Cys-59, Cys-62, Cys-74, and Cys-77. The tract at residues Asp-93–Gly-96 is G3. GTP-binding positions include Asn-149 to Asp-152 and Ser-184 to Leu-186. Residues Asn-149–Asp-152 are G4. A G5 region spans residues Ser-184–Leu-186.

The protein belongs to the TRAFAC class translation factor GTPase superfamily. Classic translation factor GTPase family. EIF2G subfamily. As to quaternary structure, heterotrimer composed of an alpha, a beta and a gamma chain. Mg(2+) serves as cofactor.

It catalyses the reaction GTP + H2O = GDP + phosphate + H(+). Its function is as follows. eIF-2 functions in the early steps of protein synthesis by forming a ternary complex with GTP and initiator tRNA. The polypeptide is Translation initiation factor 2 subunit gamma (Sulfurisphaera tokodaii (strain DSM 16993 / JCM 10545 / NBRC 100140 / 7) (Sulfolobus tokodaii)).